The primary structure comprises 316 residues: Retron Ec73 reverse transcriptase (316 aa).

The region spanning 1 to 243 (MRIYSLIDSQ…GSIVVTGLKV (243 aa)) is the Reverse transcriptase domain. Mg(2+) contacts are provided by Asp99, Asp189, and Asp190. Residues 247–316 (FHITLHRSMK…WIQNLHNKVE (70 aa)) form a necessary and required for recognition and binding of RNA region.

This sequence belongs to the bacterial reverse transcriptase family.

The enzyme catalyses DNA(n) + a 2'-deoxyribonucleoside 5'-triphosphate = DNA(n+1) + diphosphate. In terms of biological role, reverse transcriptase (RT) component of antiviral defense system retron Ec73, composed of a non-coding RNA (ncRNA) followed by a ribosyltransferase/DNA-binding protein then a reverse transcriptase (RT). Expression of this retron confers protection against bacteriophages SECphi4, SECphi6, SECphi27 and P1. At multiplicity of infection (MOI) of 0.02 cultures grow normally when infected with SECphi4 without collapsing, at MOI 2 cultures enter growth stasis. Responsible for synthesis of msDNA-Ec73 (a branched molecule with RNA linked by a 2',5'-phosphodiester bond to ssDNA). The retron transcript serves as primer (from a conserved internal G residue) and template for the reaction, and codes for the RT. Recognizes only its cognate RNA as a primer template. This Escherichia coli protein is Retron Ec73 reverse transcriptase.